Consider the following 207-residue polypeptide: Putative zinc finger protein 137 (207 aa).

A C2H2-type 1 zinc finger spans residues C72 to H94. The C2H2-type 2; degenerate zinc-finger motif lies at Y100 to H122. The C2H2-type 3; degenerate zinc-finger motif lies at Y128 to H150. C2H2-type zinc fingers lie at residues H156–H178 and Y184–H206.

Belongs to the krueppel C2H2-type zinc-finger protein family.

It is found in the nucleus. In terms of biological role, may be involved in transcriptional regulation. This is Putative zinc finger protein 137 (ZNF137P) from Homo sapiens (Human).